Consider the following 375-residue polypeptide: Probable L-tyrosine/L-aspartate decarboxylase (375 aa).

Residue Lys-226 is modified to N6-(pyridoxal phosphate)lysine.

The protein belongs to the group II decarboxylase family. MfnA subfamily. Requires pyridoxal 5'-phosphate as cofactor.

The enzyme catalyses L-tyrosine + H(+) = tyramine + CO2. The catalysed reaction is L-aspartate + H(+) = beta-alanine + CO2. It participates in cofactor biosynthesis; methanofuran biosynthesis. The protein operates within cofactor biosynthesis; coenzyme A biosynthesis. In terms of biological role, catalyzes the decarboxylation of L-tyrosine to produce tyramine for methanofuran biosynthesis. Can also catalyze the decarboxylation of L-aspartate to produce beta-alanine for coenzyme A (CoA) biosynthesis. This Methanocella arvoryzae (strain DSM 22066 / NBRC 105507 / MRE50) protein is Probable L-tyrosine/L-aspartate decarboxylase.